The sequence spans 278 residues: Tryptophan synthase alpha chain (278 aa).

Catalysis depends on proton acceptor residues Glu-61 and Asp-72.

The protein belongs to the TrpA family. As to quaternary structure, tetramer of two alpha and two beta chains.

It carries out the reaction (1S,2R)-1-C-(indol-3-yl)glycerol 3-phosphate + L-serine = D-glyceraldehyde 3-phosphate + L-tryptophan + H2O. The protein operates within amino-acid biosynthesis; L-tryptophan biosynthesis; L-tryptophan from chorismate: step 5/5. Functionally, the alpha subunit is responsible for the aldol cleavage of indoleglycerol phosphate to indole and glyceraldehyde 3-phosphate. This chain is Tryptophan synthase alpha chain, found in Shewanella oneidensis (strain ATCC 700550 / JCM 31522 / CIP 106686 / LMG 19005 / NCIMB 14063 / MR-1).